A 221-amino-acid chain; its full sequence is Eukaryotic translation initiation factor 3 subunit K (221 aa).

The 162-residue stretch at 46–207 folds into the PCI domain; that stretch reads YDLEANLACL…NIKTKHITEK (162 aa).

This sequence belongs to the eIF-3 subunit K family. In terms of assembly, component of the eukaryotic translation initiation factor 3 (eIF-3) complex.

It localises to the cytoplasm. Functionally, component of the eukaryotic translation initiation factor 3 (eIF-3) complex, which is involved in protein synthesis of a specialized repertoire of mRNAs and, together with other initiation factors, stimulates binding of mRNA and methionyl-tRNAi to the 40S ribosome. The eIF-3 complex specifically targets and initiates translation of a subset of mRNAs involved in cell proliferation. The chain is Eukaryotic translation initiation factor 3 subunit K from Aedes aegypti (Yellowfever mosquito).